We begin with the raw amino-acid sequence, 249 residues long: Electron transfer flavoprotein subunit beta (249 aa).

The protein belongs to the ETF beta-subunit/FixA family. In terms of assembly, heterodimer of an alpha and a beta subunit. Requires FAD as cofactor. It depends on AMP as a cofactor.

Its function is as follows. The electron transfer flavoprotein serves as a specific electron acceptor for other dehydrogenases. It transfers the electrons to the main respiratory chain via ETF-ubiquinone oxidoreductase (ETF dehydrogenase). In Bradyrhizobium diazoefficiens (strain JCM 10833 / BCRC 13528 / IAM 13628 / NBRC 14792 / USDA 110), this protein is Electron transfer flavoprotein subunit beta (etfB).